The following is a 232-amino-acid chain: Octanoyltransferase (232 aa).

Residues G40–P226 form the BPL/LPL catalytic domain. Substrate contacts are provided by residues R79–H86, A157–G159, and G170–A172. C188 acts as the Acyl-thioester intermediate in catalysis.

It belongs to the LipB family.

It localises to the cytoplasm. The enzyme catalyses octanoyl-[ACP] + L-lysyl-[protein] = N(6)-octanoyl-L-lysyl-[protein] + holo-[ACP] + H(+). It functions in the pathway protein modification; protein lipoylation via endogenous pathway; protein N(6)-(lipoyl)lysine from octanoyl-[acyl-carrier-protein]: step 1/2. Its function is as follows. Catalyzes the transfer of endogenously produced octanoic acid from octanoyl-acyl-carrier-protein onto the lipoyl domains of lipoate-dependent enzymes. Lipoyl-ACP can also act as a substrate although octanoyl-ACP is likely to be the physiological substrate. This chain is Octanoyltransferase, found in Gluconacetobacter diazotrophicus (strain ATCC 49037 / DSM 5601 / CCUG 37298 / CIP 103539 / LMG 7603 / PAl5).